The sequence spans 254 residues: MEYASDASLDPEAPWPPAPRARACRVLPWALVAGLLLLLLLAAACAVFLACPWAVSGARASPGSAASPRLREGPELSPDDPAGLLDLRQGMFAQLVAQNVLLIDGPLSWYSDPGLAGVSLTGGLSYKEDTKELVVAKAGVYYVFFQLELRRVVAGEGSGSVSLALHLQPLRSAAGAAALALTVDLPPASSEARNSAFGFQGRLLHLSAGQRLGVHLHTEARARHAWQLTQGATVLGLFRVTPEIPAGLPSPRSE.

Residues 1-28 (MEYASDASLDPEAPWPPAPRARACRVLP) lie on the Cytoplasmic side of the membrane. Residues 29–49 (WALVAGLLLLLLLAAACAVFL) traverse the membrane as a helical; Signal-anchor for type II membrane protein segment. Residues 50-254 (ACPWAVSGAR…PAGLPSPRSE (205 aa)) are Extracellular-facing. A THD domain is found at 91 to 240 (MFAQLVAQNV…GATVLGLFRV (150 aa)).

The protein belongs to the tumor necrosis factor family. Homotrimer. In terms of tissue distribution, expressed in brain, placenta, lung, skeletal muscle and kidney.

It localises to the membrane. In terms of biological role, cytokine that binds to TNFRSF9. Induces the proliferation of activated peripheral blood T-cells. May have a role in activation-induced cell death (AICD). May play a role in cognate interactions between T-cells and B-cells/macrophages. The chain is Tumor necrosis factor ligand superfamily member 9 (TNFSF9) from Homo sapiens (Human).